The primary structure comprises 253 residues: HTH-type transcriptional regulator YdeO (253 aa).

An HTH araC/xylS-type domain is found at 137 to 233 (GKVRNIVNMK…GNSPKRVSKE (97 aa)). DNA-binding regions (H-T-H motif) lie at residues 154-175 (KDICDCLYISESLLKKKLKQEQ) and 200-223 (VNKIAEQCGYASTSYFIYAFRKHF).

Functionally, induces the expression of gadE. Could also regulate the expression of other genes involved in acid resistance. The polypeptide is HTH-type transcriptional regulator YdeO (ydeO) (Shigella flexneri).